We begin with the raw amino-acid sequence, 428 residues long: 26S proteasome regulatory subunit 6B homolog (428 aa).

The residue at position 1 (methionine 1) is an N-acetylmethionine. Residue 213–220 (GPPGTGKT) participates in ATP binding. A Glycyl lysine isopeptide (Lys-Gly) (interchain with G-Cter in ubiquitin) cross-link involves residue lysine 280.

This sequence belongs to the AAA ATPase family. N-acetylated by NAT3.

It localises to the cytoplasm. It is found in the nucleus. Its function is as follows. The 26S proteasome is involved in the ATP-dependent degradation of ubiquitinated proteins. The regulatory (or ATPase) complex confers ATP dependency and substrate specificity to the 26S complex. This is 26S proteasome regulatory subunit 6B homolog (RPT3) from Saccharomyces cerevisiae (strain ATCC 204508 / S288c) (Baker's yeast).